We begin with the raw amino-acid sequence, 207 residues long: Cilia- and flagella-associated protein 418 (207 aa).

Residues 1–75 (MAEDLDELLD…LINEIFEEPH (75 aa)) form a required for interaction with FAM161A region.

Interacts (via N-terminus) with FAM161A (via central region); the interaction is direct. In terms of tissue distribution, expressed in the retina (at protein level).

It is found in the cytoplasm. Its subcellular location is the photoreceptor inner segment. May be involved in photoreceptor outer segment disk morphogenesis. The polypeptide is Cilia- and flagella-associated protein 418 (CFAP418) (Bos taurus (Bovine)).